Consider the following 162-residue polypeptide: Lipoprotein signal peptidase (162 aa).

4 helical membrane passes run 12–32, 42–62, 66–86, and 93–113; these read WFALAALVIVLDQISKLYFNS, VVEGFFNFTLVYNPGAAFSFL, GGWQKYLFTILAFAVSGWLGW, and FSGLMNLAAAFIMGGALGNVI. Active-site residues include Asp-123 and Asp-142. The helical transmembrane segment at 133 to 153 threads the bilayer; it reads WYYPAFNLADSFICVGAALMV.

Belongs to the peptidase A8 family.

It is found in the cell inner membrane. The catalysed reaction is Release of signal peptides from bacterial membrane prolipoproteins. Hydrolyzes -Xaa-Yaa-Zaa-|-(S,diacylglyceryl)Cys-, in which Xaa is hydrophobic (preferably Leu), and Yaa (Ala or Ser) and Zaa (Gly or Ala) have small, neutral side chains.. It functions in the pathway protein modification; lipoprotein biosynthesis (signal peptide cleavage). In terms of biological role, this protein specifically catalyzes the removal of signal peptides from prolipoproteins. This chain is Lipoprotein signal peptidase, found in Chromobacterium violaceum (strain ATCC 12472 / DSM 30191 / JCM 1249 / CCUG 213 / NBRC 12614 / NCIMB 9131 / NCTC 9757 / MK).